Consider the following 84-residue polypeptide: Large ribosomal subunit protein bL27 (84 aa).

A disordered region spans residues 1–22 (MAHKKAGGSTRNGRDSESKRLG).

The protein belongs to the bacterial ribosomal protein bL27 family.

The sequence is that of Large ribosomal subunit protein bL27 from Shewanella woodyi (strain ATCC 51908 / MS32).